The following is a 347-amino-acid chain: MTTASQPPLIMGIESSCDETGVAFVRGCELLADEVASSVDEHARFGGVVPEVASRAHLEAMTPTVRRAAERAGVRLSDVDAIAVTVGPGLAGALLVGLSAAKAYALALDKPLYGVNHLVGHVAVDQLEHGPLPKPVVALLVSGGHTSLLLVRDLATDVQLLGETVDDAAGEAYDKVARLLNLPYPGGPPIDRAARDGDGTAIHFPRGKWGDGTYDFSFSGLKTAVARWVEDAERQGRPVSVPDVAAAFQEAVADVLTRKAVDACREHGVRHLVISGGVAANSRLRALAEERCAAAGIEVRVPRPRLCTDNGAMIAALGAEVVAAGLPPSPLDMAVDTSLPVSSVLVN.

The Fe cation site is built by H117 and H121. Substrate contacts are provided by residues 140–144 (LVSGG), D174, G187, D191, and N281. Fe cation is bound at residue D309.

The protein belongs to the KAE1 / TsaD family. Fe(2+) serves as cofactor.

It localises to the cytoplasm. The enzyme catalyses L-threonylcarbamoyladenylate + adenosine(37) in tRNA = N(6)-L-threonylcarbamoyladenosine(37) in tRNA + AMP + H(+). Functionally, required for the formation of a threonylcarbamoyl group on adenosine at position 37 (t(6)A37) in tRNAs that read codons beginning with adenine. Is involved in the transfer of the threonylcarbamoyl moiety of threonylcarbamoyl-AMP (TC-AMP) to the N6 group of A37, together with TsaE and TsaB. TsaD likely plays a direct catalytic role in this reaction. This chain is tRNA N6-adenosine threonylcarbamoyltransferase, found in Thermobifida fusca (strain YX).